Consider the following 588-residue polypeptide: L-fucose isomerase (588 aa).

Residues Glu-335 and Asp-359 each act as proton acceptor in the active site. Mn(2+) contacts are provided by Glu-335, Asp-359, and His-525.

This sequence belongs to the L-fucose isomerase family. Mn(2+) is required as a cofactor.

The protein localises to the cytoplasm. The enzyme catalyses L-fucose = L-fuculose. Its pathway is carbohydrate degradation; L-fucose degradation; L-lactaldehyde and glycerone phosphate from L-fucose: step 1/3. Its function is as follows. Converts the aldose L-fucose into the corresponding ketose L-fuculose. The polypeptide is L-fucose isomerase (Streptococcus pneumoniae (strain Hungary19A-6)).